The chain runs to 76 residues: Omega-conotoxin-like TxO5 (76 aa).

A signal peptide spans 1–22; that stretch reads MKLTCMMIVAVLFLTAWTFVTA. Residues 23-48 constitute a propeptide that is removed on maturation; that stretch reads ITSNGLENLFPKAHHEMKNPEASKLN. Intrachain disulfides connect cysteine 51-cysteine 66, cysteine 58-cysteine 70, and cysteine 65-cysteine 75.

This sequence belongs to the conotoxin O1 superfamily. As to expression, expressed by the venom duct.

The protein resides in the secreted. Omega-conotoxins act at presynaptic membranes, they bind and block voltage-gated calcium channels (Cav). The sequence is that of Omega-conotoxin-like TxO5 from Conus textile (Cloth-of-gold cone).